The primary structure comprises 89 residues: Small ribosomal subunit protein uS15 (89 aa).

Belongs to the universal ribosomal protein uS15 family. As to quaternary structure, part of the 30S ribosomal subunit. Forms a bridge to the 50S subunit in the 70S ribosome, contacting the 23S rRNA.

Its function is as follows. One of the primary rRNA binding proteins, it binds directly to 16S rRNA where it helps nucleate assembly of the platform of the 30S subunit by binding and bridging several RNA helices of the 16S rRNA. Forms an intersubunit bridge (bridge B4) with the 23S rRNA of the 50S subunit in the ribosome. The sequence is that of Small ribosomal subunit protein uS15 from Bradyrhizobium sp. (strain BTAi1 / ATCC BAA-1182).